We begin with the raw amino-acid sequence, 206 residues long: uncharacterized protein (206 aa).

Disordered regions lie at residues 64 to 123 (NTES…DPSL) and 155 to 206 (VTTP…SSGG). Residues 66-79 (ESTQKTATTQQQGL) are compositionally biased toward polar residues. Positions 97-107 (AENNAQANQSE) are enriched in low complexity. Basic and acidic residues predominate over residues 108-118 (NRAESTTKAES). Residues 155–167 (VTTPTGQVVQPQT) are compositionally biased toward low complexity. The span at 182–198 (GSMNSKPVSRGGFSSPN) shows a compositional bias: polar residues.

This is an uncharacterized protein from Haemophilus influenzae (strain ATCC 51907 / DSM 11121 / KW20 / Rd).